Here is a 287-residue protein sequence, read N- to C-terminus: Maleylpyruvate hydrolase (287 aa).

A divalent metal cation-binding residues include E143, E145, and D174.

Belongs to the FAH family. Homodimer.

It carries out the reaction 3-maleylpyruvate + H2O = maleate + pyruvate + H(+). With respect to regulation, activated by Mn(2+). Inhibited by Ni(2+), Cd(2+), Co(2+) or Cu(2+). In terms of biological role, involved in the degradation of gentisate. Catalyzes the hydrolysis of 3-maleylpyruvate, the ring-cleavage product of gentisate. In Aquipseudomonas alcaligenes (Pseudomonas alcaligenes), this protein is Maleylpyruvate hydrolase.